The sequence spans 244 residues: Orotidine 5'-phosphate decarboxylase (244 aa).

Substrate is bound by residues Asp-10, Lys-32, 59–68 (DLKLHDIPNT), Thr-122, Arg-184, Gln-193, Gly-213, and Arg-214. Catalysis depends on Lys-61, which acts as the Proton donor.

Belongs to the OMP decarboxylase family. Type 1 subfamily. In terms of assembly, homodimer.

It catalyses the reaction orotidine 5'-phosphate + H(+) = UMP + CO2. The protein operates within pyrimidine metabolism; UMP biosynthesis via de novo pathway; UMP from orotate: step 2/2. Functionally, catalyzes the decarboxylation of orotidine 5'-monophosphate (OMP) to uridine 5'-monophosphate (UMP). This chain is Orotidine 5'-phosphate decarboxylase, found in Geobacillus kaustophilus (strain HTA426).